A 183-amino-acid chain; its full sequence is Protein Dr1 (183 aa).

The 64-residue stretch at 19–82 (TLPRASINKI…INAEHVLEAL (64 aa)) folds into the Histone-fold domain. Residues 92-183 (QEAEAVLHDC…DDDDDDDDDY (92 aa)) are repression of TATA-containing promoters. A disordered region spans residues 155-183 (AMVQRPPLADGSVASKPSEDDDDDDDDDY). Over residues 173–183 (EDDDDDDDDDY) the composition is skewed to acidic residues.

It belongs to the NC2 beta/DR1 family. In terms of assembly, component of the Ada2a-containing (ATAC) complex composed of at least Ada2a, Atac1, Hcf, Ada3, Gcn5, Mocs2B, Charac-14, Atac3, Atac2, NC2beta and wds. Homodimer. Interacts with NC2-alpha/Drap1 to form the dNC2 complex.

The protein resides in the nucleus. Bifunctional basic transcription factor. Activates transcription of DPE (Downstream Promoter Element) containing promoters while repressing transcription of promoters which contain TATA elements. Together with Chrac-14, promotes nucleosome sliding of ATP-dependent nucleosome remodeling complexes. In Drosophila melanogaster (Fruit fly), this protein is Protein Dr1 (NC2beta).